The following is a 360-amino-acid chain: D-alanine--D-alanine ligase (360 aa).

The ATP-grasp domain maps to 146–352 (KICAEHAGLH…FSQLIDRLLQ (207 aa)). 179-234 (LEEFTLPFFVKPASQGSSIGITKVHRPEELAAALEKAFMVDTKVLIEKTIEGREIE) contributes to the ATP binding site. Positions 305, 319, and 321 each coordinate Mg(2+).

The protein belongs to the D-alanine--D-alanine ligase family. The cofactor is Mg(2+). Requires Mn(2+) as cofactor.

The protein resides in the cytoplasm. It catalyses the reaction 2 D-alanine + ATP = D-alanyl-D-alanine + ADP + phosphate + H(+). It functions in the pathway cell wall biogenesis; peptidoglycan biosynthesis. In terms of biological role, cell wall formation. The protein is D-alanine--D-alanine ligase of Prosthecochloris aestuarii (strain DSM 271 / SK 413).